The chain runs to 430 residues: Adenylosuccinate synthetase (430 aa).

Residues 12-18 (GDEGKGK) and 40-42 (GHT) each bind GTP. The Proton acceptor role is filled by D13. Positions 13 and 40 each coordinate Mg(2+). IMP contacts are provided by residues 13–16 (DEGK), 38–41 (NAGH), T128, R142, Q223, T238, and R302. H41 acts as the Proton donor in catalysis. Residue 298–304 (TTTGRPR) participates in substrate binding. Residues R304, 330–332 (SID), and 412–414 (SVG) contribute to the GTP site.

It belongs to the adenylosuccinate synthetase family. Homodimer. It depends on Mg(2+) as a cofactor.

It localises to the cytoplasm. The enzyme catalyses IMP + L-aspartate + GTP = N(6)-(1,2-dicarboxyethyl)-AMP + GDP + phosphate + 2 H(+). It functions in the pathway purine metabolism; AMP biosynthesis via de novo pathway; AMP from IMP: step 1/2. Its function is as follows. Plays an important role in the de novo pathway of purine nucleotide biosynthesis. Catalyzes the first committed step in the biosynthesis of AMP from IMP. The protein is Adenylosuccinate synthetase of Streptococcus sanguinis (strain SK36).